We begin with the raw amino-acid sequence, 250 residues long: Coproheme decarboxylase (250 aa).

Residues R131, Y145–K149, H172, and Q185 contribute to the Fe-coproporphyrin III site. Y145 is a catalytic residue.

It belongs to the ChdC family. Type 1 subfamily. The cofactor is Fe-coproporphyrin III.

The catalysed reaction is Fe-coproporphyrin III + 2 H2O2 + 2 H(+) = heme b + 2 CO2 + 4 H2O. It carries out the reaction Fe-coproporphyrin III + H2O2 + H(+) = harderoheme III + CO2 + 2 H2O. The enzyme catalyses harderoheme III + H2O2 + H(+) = heme b + CO2 + 2 H2O. Its pathway is porphyrin-containing compound metabolism; protoheme biosynthesis. Its function is as follows. Involved in coproporphyrin-dependent heme b biosynthesis. Catalyzes the decarboxylation of Fe-coproporphyrin III (coproheme) to heme b (protoheme IX), the last step of the pathway. The reaction occurs in a stepwise manner with a three-propionate intermediate. In Staphylococcus aureus (strain MRSA252), this protein is Coproheme decarboxylase.